A 170-amino-acid chain; its full sequence is 3-hydroxydecanoyl-[acyl-carrier-protein] dehydratase (170 aa).

His-69 is an active-site residue.

It belongs to the thioester dehydratase family. FabA subfamily. As to quaternary structure, homodimer.

It localises to the cytoplasm. It carries out the reaction a (3R)-hydroxyacyl-[ACP] = a (2E)-enoyl-[ACP] + H2O. It catalyses the reaction (3R)-hydroxydecanoyl-[ACP] = (2E)-decenoyl-[ACP] + H2O. The catalysed reaction is (2E)-decenoyl-[ACP] = (3Z)-decenoyl-[ACP]. Its pathway is lipid metabolism; fatty acid biosynthesis. Its function is as follows. Necessary for the introduction of cis unsaturation into fatty acids. Catalyzes the dehydration of (3R)-3-hydroxydecanoyl-ACP to E-(2)-decenoyl-ACP and then its isomerization to Z-(3)-decenoyl-ACP. Can catalyze the dehydratase reaction for beta-hydroxyacyl-ACPs with saturated chain lengths up to 16:0, being most active on intermediate chain length. The chain is 3-hydroxydecanoyl-[acyl-carrier-protein] dehydratase from Caulobacter vibrioides (strain ATCC 19089 / CIP 103742 / CB 15) (Caulobacter crescentus).